Consider the following 145-residue polypeptide: Bacilliredoxin BrxB (145 aa).

Residues Cys-52 and Cys-54 each act as nucleophile in the active site. The residue at position 52 (Cys-52) is an S-bacillithiol cysteine disulfide. The CXC active site motif motif lies at 52-54; it reads CGC. An intrachain disulfide couples Cys-52 to Cys-54.

Belongs to the bacilliredoxin family. In terms of assembly, interacts with BrxC. Post-translationally, N-terminal Cys of the CXC active site motif can react with bacillithiol (BSH) to form mixed disulfides. S-bacillithiolation protects Cys residues against overoxidation by acting as a redox switch in response to oxidative stress.

In terms of biological role, S-bacillithiolation is the formation of mixed disulfide bonds between protein thiols and the general thiol reductant bacillithiol (BSH) under oxidative stress. BSH is an equivalent of glutathione (GSH) in Firmicutes. This protein is a dithiol bacilliredoxin, which debacillithiolates (removes BSH) the S-bacillithiolated OhrR (OhrR-SSB) in vitro and in vivo NaOCl-generated S-bacillithiolated MetE (MetE-SSB). Involved in maintaining redox homeostasis in response to disulfide stress conditions. The sequence is that of Bacilliredoxin BrxB from Bacillus subtilis (strain 168).